A 381-amino-acid polypeptide reads, in one-letter code: Alkanesulfonate monooxygenase (381 aa).

Belongs to the SsuD family. Homotetramer.

It carries out the reaction an alkanesulfonate + FMNH2 + O2 = an aldehyde + FMN + sulfite + H2O + 2 H(+). Functionally, catalyzes the desulfonation of aliphatic sulfonates. The sequence is that of Alkanesulfonate monooxygenase from Escherichia coli O8 (strain IAI1).